A 253-amino-acid polypeptide reads, in one-letter code: Phycoerythrobilin:ferredoxin oxidoreductase (253 aa).

It belongs to the HY2 family.

The enzyme catalyses (3Z)-phycoerythrobilin + oxidized 2[4Fe-4S]-[ferredoxin] = 15,16-dihydrobiliverdin + reduced 2[4Fe-4S]-[ferredoxin] + 2 H(+). Functionally, catalyzes the two-electron reduction of the C2 and C3(1) diene system of 15,16-dihydrobiliverdin. This Prochlorococcus marinus (strain MIT 9301) protein is Phycoerythrobilin:ferredoxin oxidoreductase.